A 132-amino-acid polypeptide reads, in one-letter code: Myelin P2 protein (132 aa).

N-acetylserine is present on serine 2. Residues arginine 107 and 127–129 contribute to the (9Z)-octadecenoate site; that span reads RIY. Hexadecanoate contacts are provided by residues arginine 107 and 127-129; that span reads RIY.

It belongs to the calycin superfamily. Fatty-acid binding protein (FABP) family. As to quaternary structure, monomer.

Its subcellular location is the cytoplasm. Functionally, may play a role in lipid transport protein in Schwann cells. May bind cholesterol. In Mus musculus (Mouse), this protein is Myelin P2 protein (Pmp2).